A 1414-amino-acid chain; its full sequence is Phenyloxazoline synthase MbtB (1414 aa).

The region spanning Thr-5–Thr-78 is the Carrier 1 domain. At Ser-39 the chain carries O-(pantetheine 4'-phosphoryl)serine. The interval Glu-96–Thr-394 is condensation/cyclization. Residues Ser-579–Ala-975 are adenylation. Residues Ala-1057 to Glu-1135 enclose the Carrier 2 domain. The residue at position 1094 (Ser-1094) is an O-(pantetheine 4'-phosphoryl)serine. The interval Gly-1188–Val-1413 is thioesterase.

The protein belongs to the ATP-dependent AMP-binding enzyme family. MbtB subfamily. Requires pantetheine 4'-phosphate as cofactor. In terms of processing, 4'-phosphopantetheine is transferred from CoA to a specific serine in each of the two carrier protein domains, leading to their activation from apo to holo forms.

It participates in siderophore biosynthesis; mycobactin biosynthesis. Functionally, involved in the initial steps of the mycobactin biosynthetic pathway. Putatively couples activated salicylic acid with serine or threonine and cyclizes this precursor to the hydroxyphenyloxazoline ring system present in this class of siderophores. Essential for growth in macrophages. The chain is Phenyloxazoline synthase MbtB (mbtB) from Mycobacterium tuberculosis (strain CDC 1551 / Oshkosh).